Here is a 356-residue protein sequence, read N- to C-terminus: Alanine racemase, catabolic (356 aa).

The active-site Proton acceptor; specific for D-alanine is Lys35. The residue at position 35 (Lys35) is an N6-(pyridoxal phosphate)lysine. Substrate is bound at residue Arg130. The active-site Proton acceptor; specific for L-alanine is the Tyr253. Met301 contacts substrate.

It belongs to the alanine racemase family. Pyridoxal 5'-phosphate is required as a cofactor.

The enzyme catalyses L-alanine = D-alanine. Functionally, isomerizes L-alanine to D-alanine which is then oxidized to pyruvate by DadA. This Escherichia coli O157:H7 protein is Alanine racemase, catabolic (dadX).